Reading from the N-terminus, the 189-residue chain is Transcriptional repressor NrdR (189 aa).

A zinc finger spans residues 3 to 34; it reads CPFCRGDDSRVVDSREVEDGQAIRRRRSCSGC. The ATP-cone domain occupies 46-136; it reads LSVVKRSGVT…VYRAFSSVED (91 aa). The interval 152–189 is disordered; sequence RLPEGPEAAQGGPESKAGNGQAAGSGDPEGVKAEKSSE. Positions 180 to 189 are enriched in basic and acidic residues; it reads EGVKAEKSSE.

Belongs to the NrdR family. Zn(2+) is required as a cofactor.

Negatively regulates transcription of bacterial ribonucleotide reductase nrd genes and operons by binding to NrdR-boxes. This chain is Transcriptional repressor NrdR, found in Saccharopolyspora erythraea (strain ATCC 11635 / DSM 40517 / JCM 4748 / NBRC 13426 / NCIMB 8594 / NRRL 2338).